Reading from the N-terminus, the 998-residue chain is Collagen alpha-1(I) chain (998 aa).

The tract at residues 1–998 (GGVSVPGPMG…PGPPGPPGPP (998 aa)) is disordered. 4-hydroxyproline is present on residues Pro18, Pro21, Pro24, Pro33, Pro48, Pro63, Pro69, Pro78, and Pro84. The span at 26 to 39 (PQGFQGPPGSSGPM) shows a compositional bias: low complexity. The span at 51 to 65 (NGDDGEAGKPGRPGE) shows a compositional bias: basic and acidic residues. The residue at position 87 (Lys87) is a 5-hydroxylysine; alternate. O-linked (Gal...) hydroxylysine; alternate glycosylation is present at Lys87. Ser93 bears the Phosphoserine mark. Low complexity predominate over residues 101 to 115 (DAGPAGPKQMGPRGL). 13 positions are modified to 4-hydroxyproline: Pro116, Pro122, Pro143, Pro152, Pro155, Pro182, Pro185, Pro197, Pro203, Pro212, Pro218, Pro221, and Pro236. Residues 122-140 (PGASGPAGARGNDGATGAA) are compositionally biased toward low complexity. Residues 142–154 (PPGPTGPAGPPGF) are compositionally biased toward pro residues. Residues 188-238 (AGAAGPAGNPGADGQPGAKGANGAPGIAGAPGFPGARGPSGPQGPSGAPGP) are compositionally biased toward low complexity. 5-hydroxylysine is present on Lys239. Pro245, Pro248, Pro260, Pro269, Pro284, Pro290, Pro299, and Pro305 each carry 4-hydroxyproline. Positions 294–303 (GERGGPGSRG) are enriched in gly residues. A 5-hydroxylysine modification is found at Lys314. 4-hydroxyproline occurs at positions 323, 332, 338, 344, 353, 356, 365, 374, 380, 392, 401, 410, 413, 431, 449, 455, 461, 467, 473, 479, 491, 500, 511, 523, 526, 532, 538, and 547. A compositionally biased stretch (low complexity) spans 347-401 (KGLTGSPGSPGPDGKTGPPGPAGQDGRPGPAGPPGARGQAGVMGFPGPKGAAGEP). Positions 443-470 (QGPAGSPGFQGLPGPAGPPGEAGKPGEQ) are enriched in low complexity. Low complexity predominate over residues 513 to 535 (NDGAKGDAGAPGAPGSQGAPGLQ). Lys559 carries the 5-hydroxylysine modification. Residues Pro565 and Pro580 each carry the 4-hydroxyproline modification. Low complexity predominate over residues 592–606 (TGPSGPAGPTGARGA). Phosphoserine is present on Ser595. 8 positions are modified to 4-hydroxyproline: Pro607, Pro613, Pro616, Pro625, Pro631, Pro649, Pro658, and Pro667. A compositionally biased stretch (low complexity) spans 619–646 (AGFAGPPGADGQPGAKGEPGDAGAKGDA). Over residues 648–660 (PPGPAGPTGPPGP) the composition is skewed to pro residues. A 5-hydroxylysine modification is found at Lys670. A compositionally biased stretch (low complexity) spans 675–691 (SAGPPGATGFPGAAGRV). 4-hydroxyproline is present on residues Pro679 and Pro685. Pro693 is modified (3-hydroxyproline). Residues Pro694, Pro703, Pro706, Pro727, Pro736, Pro744, Pro753, Pro771, Pro780, Pro783, Pro789, Pro804, Pro810, Pro816, Pro825, and Pro831 each carry the 4-hydroxyproline modification. The span at 720-729 (ETGPAGRPGE) shows a compositional bias: low complexity. Residues 741 to 762 (KGSPGADGPAGAPGTPGPQGIA) are compositionally biased toward low complexity. The segment covering 803–813 (PPGPMGPPGLA) has biased composition (pro residues). The span at 815–830 (PPGEAGREGSPGAEGS) shows a compositional bias: low complexity. Lys840 carries the 5-hydroxylysine modification. Residues 848-863 (PGPPGAPGAPGAPGPV) show a composition bias toward pro residues. 4-hydroxyproline is present on residues Pro851, Pro854, and Pro857. A compositionally biased stretch (low complexity) spans 884–898 (AGPAGARGPAGPQGP). The segment covering 899 to 913 (RGDKGETGEQGDRGI) has biased composition (basic and acidic residues). Lys902 bears the 5-hydroxylysine mark. Position 914 is a 5-hydroxylysine; alternate (Lys914). The O-linked (Gal...) hydroxylysine; alternate glycan is linked to Lys914. 4 positions are modified to 4-hydroxyproline: Pro929, Pro932, Pro950, and Pro965. The segment covering 932–965 (PGEQGPSGASGPAGPRGPPGSAGTPGKDGLNGLP) has biased composition (low complexity). Pro970 carries the 3-hydroxyproline modification. Pro971 carries the post-translational modification 4-hydroxyproline. Residues 983-998 (VGPPGPPGPPGPPGPP) show a composition bias toward pro residues. 3-hydroxyproline is present on Pro985. Pro986 bears the 4-hydroxyproline mark. Pro988 carries the post-translational modification 3-hydroxyproline. The residue at position 989 (Pro989) is a 4-hydroxyproline. Position 991 is a 3-hydroxyproline (Pro991). A 4-hydroxyproline mark is found at Pro992, Pro995, and Pro998.

It belongs to the fibrillar collagen family. In terms of assembly, trimers of one alpha 2(I) and two alpha 1(I) chains. Post-translationally, contains mostly 4-hydroxyproline. Proline residues at the third position of the tripeptide repeating unit (G-X-Y) are hydroxylated in some or all of the chains. In terms of processing, contains 3-hydroxyproline at a few sites. This modification occurs on the first proline residue in the sequence motif Gly-Pro-Hyp, where Hyp is 4-hydroxyproline. Lysine residues at the third position of the tripeptide repeating unit (G-X-Y) are 5-hydroxylated in some or all of the chains. Post-translationally, O-glycosylated on hydroxylated lysine residues. The O-linked glycan consists of a Glc-Gal disaccharide. In terms of tissue distribution, expressed in bones.

Its subcellular location is the secreted. The protein resides in the extracellular space. It localises to the extracellular matrix. Functionally, type I collagen is a member of group I collagen (fibrillar forming collagen). The polypeptide is Collagen alpha-1(I) chain (Glyptodon sp. (strain SLP-2019) (Giant armadillo)).